We begin with the raw amino-acid sequence, 188 residues long: Threonylcarbamoyl-AMP synthase (188 aa).

Positions 8–188 constitute a YrdC-like domain; the sequence is EGAQPGLHAY…DLATGKILRA (181 aa).

The protein belongs to the SUA5 family. TsaC subfamily.

Its subcellular location is the cytoplasm. The catalysed reaction is L-threonine + hydrogencarbonate + ATP = L-threonylcarbamoyladenylate + diphosphate + H2O. In terms of biological role, required for the formation of a threonylcarbamoyl group on adenosine at position 37 (t(6)A37) in tRNAs that read codons beginning with adenine. Catalyzes the conversion of L-threonine, HCO(3)(-)/CO(2) and ATP to give threonylcarbamoyl-AMP (TC-AMP) as the acyladenylate intermediate, with the release of diphosphate. The protein is Threonylcarbamoyl-AMP synthase of Thiobacillus denitrificans (strain ATCC 25259 / T1).